A 381-amino-acid chain; its full sequence is Prolargin (381 aa).

The N-terminal stretch at 1–21 is a signal peptide; that stretch reads MRSSLCWLLTLLLILATAAQG. Residues 19–65 form a disordered region; it reads AQGQPTRRPRPRPRPRPRPRLRPTPSFPQPDEPTEPTDLPPPLPPGP. Residues 25–39 show a composition bias toward basic residues; the sequence is RRPRPRPRPRPRPRL. Residues 56 to 65 are compositionally biased toward pro residues; the sequence is DLPPPLPPGP. LRR repeat units follow at residues 94 to 113, 114 to 137, 138 to 161, 162 to 182, 183 to 206, 207 to 232, 233 to 253, 254 to 277, 278 to 302, 303 to 322, 323 to 361, and 362 to 381; these read RKVP…NNFI, TELP…NNRI, RKVD…KNQL, EEVP…QNQI, SRIP…HNKL, SDGV…HNTL, RKMP…SNRI, EAIP…YNQL, SDRG…HNRI, SSVP…NNSI, EKIN…GNYL, and KPPI…SVVI. N-linked (GlcNAc...) asparagine glycosylation occurs at Asn123. Residues Asn288, Asn319, and Asn326 are each glycosylated (N-linked (GlcNAc...) asparagine). Cysteines 331 and 372 form a disulfide.

Belongs to the small leucine-rich proteoglycan (SLRP) family. SLRP class II subfamily. As to quaternary structure, binds the basement membrane heparan sulfate proteoglycan perlecan and triple helical collagens type I and type II. Post-translationally, glycosylated; contains heparan sulfate.

It localises to the secreted. The protein resides in the extracellular space. The protein localises to the extracellular matrix. In terms of biological role, may anchor basement membranes to the underlying connective tissue. This is Prolargin (PRELP) from Bos taurus (Bovine).